An 821-amino-acid polypeptide reads, in one-letter code: PX domain-containing protein C1450.12 (821 aa).

The PX domain maps to 171 to 310 (AYVLGVRQST…SFLTDDPVTL (140 aa)). Residues 235-271 (KDDHDTYLNSSEDSTLSPLPSRSSDTNDPQSDSQHVL) form a disordered region. Residues 241-268 (YLNSSEDSTLSPLPSRSSDTNDPQSDSQ) show a composition bias toward polar residues. A phosphothreonine mark is found at T260 and T597. 2 stretches are compositionally biased toward acidic residues: residues 737 to 746 (GDEDDQDEND) and 754 to 766 (EHME…EEFD). The segment at 737 to 766 (GDEDDQDENDQVTKVEEEHMEDDDSVEEFD) is disordered. S761 is modified (phosphoserine).

Its subcellular location is the mitochondrion membrane. The chain is PX domain-containing protein C1450.12 from Schizosaccharomyces pombe (strain 972 / ATCC 24843) (Fission yeast).